The chain runs to 320 residues: Putative GDP-polyphosphate phosphotransferase PKK2A (320 aa).

Disordered stretches follow at residues 1–21 (MRKKKDGQNLPDFRKNPPKLD), 246–267 (RPLPEIPHRPDSESDYVRPPRD), and 281–320 (EERIKKEEKAKKAKKPAKAAGKNSDKQKSSGGKGKKKSKK). The span at 12–21 (DFRKNPPKLD) shows a compositional bias: basic and acidic residues. The segment covering 281 to 290 (EERIKKEEKA) has biased composition (basic and acidic residues).

Belongs to the polyphosphate kinase 2 (PPK2) family. Class I subfamily.

The catalysed reaction is [phosphate](n) + GTP = [phosphate](n+1) + GDP. The sequence is that of Putative GDP-polyphosphate phosphotransferase PKK2A from Corynebacterium glutamicum (strain ATCC 13032 / DSM 20300 / JCM 1318 / BCRC 11384 / CCUG 27702 / LMG 3730 / NBRC 12168 / NCIMB 10025 / NRRL B-2784 / 534).